Here is a 272-residue protein sequence, read N- to C-terminus: Acetyl-coenzyme A carboxylase carboxyl transferase subunit alpha (272 aa).

In terms of domain architecture, CoA carboxyltransferase C-terminal spans 1-248 (MDKDFMKINV…KKTIVDSLLE (248 aa)).

The protein belongs to the AccA family. In terms of assembly, acetyl-CoA carboxylase is a heterohexamer composed of biotin carboxyl carrier protein (AccB), biotin carboxylase (AccC) and two subunits each of ACCase subunit alpha (AccA) and ACCase subunit beta (AccD).

The protein resides in the cytoplasm. It catalyses the reaction N(6)-carboxybiotinyl-L-lysyl-[protein] + acetyl-CoA = N(6)-biotinyl-L-lysyl-[protein] + malonyl-CoA. It participates in lipid metabolism; malonyl-CoA biosynthesis; malonyl-CoA from acetyl-CoA: step 1/1. Functionally, component of the acetyl coenzyme A carboxylase (ACC) complex. First, biotin carboxylase catalyzes the carboxylation of biotin on its carrier protein (BCCP) and then the CO(2) group is transferred by the carboxyltransferase to acetyl-CoA to form malonyl-CoA. This chain is Acetyl-coenzyme A carboxylase carboxyl transferase subunit alpha, found in Clostridium beijerinckii (strain ATCC 51743 / NCIMB 8052) (Clostridium acetobutylicum).